Consider the following 258-residue polypeptide: Type III pantothenate kinase (258 aa).

6-13 (DVGNSDTV) contributes to the ATP binding site. 108–111 (GSDR) contributes to the substrate binding site. Residue Asp110 is the Proton acceptor of the active site. Position 130 (Asp130) interacts with K(+). Thr133 contributes to the ATP binding site. Thr185 provides a ligand contact to substrate.

Belongs to the type III pantothenate kinase family. Homodimer. NH4(+) is required as a cofactor. It depends on K(+) as a cofactor.

It is found in the cytoplasm. It catalyses the reaction (R)-pantothenate + ATP = (R)-4'-phosphopantothenate + ADP + H(+). Its pathway is cofactor biosynthesis; coenzyme A biosynthesis; CoA from (R)-pantothenate: step 1/5. In terms of biological role, catalyzes the phosphorylation of pantothenate (Pan), the first step in CoA biosynthesis. The protein is Type III pantothenate kinase of Thermobifida fusca (strain YX).